Consider the following 226-residue polypeptide: TPD1 protein homolog 1A (226 aa).

The signal sequence occupies residues 1–35 (MRVSSASSTPPPPAFAAAAWAVVLLAMLRSDVALA).

In terms of assembly, interacts with MSP1. Expressed in roots, and anthers and ovules during meiosis.

Involved in cell specification during anther development. Required for the differentiation of primary parietal cells into secondary parietal cells in anthers. May serve as an extracellular ligand for the MSP1 receptor kinase to limit sporocyte number in ovules. The chain is TPD1 protein homolog 1A from Oryza sativa subsp. japonica (Rice).